The sequence spans 782 residues: ATP-dependent RNA helicase MAK5 (782 aa).

The span at 1–22 (MAKQGKNKVSKPRKPPTLKQKL) shows a compositional bias: basic residues. 2 disordered regions span residues 1–24 (MAKQGKNKVSKPRKPPTLKQKLKK) and 71–164 (FIVR…KDDK). Positions 71–88 (FIVRDNGKVENKSKKEET) are enriched in basic and acidic residues. The segment covering 96–147 (MDVEDNETPEVEDEKPTEQEEEEEEEEEEEEEEEEEEEEEEFAGFEDDENNQ) has biased composition (acidic residues). A Q motif motif is present at residues 197 to 225 (EGDLGSSISAYTLYGLSQLDFKKPTPIQK). The region spanning 228 to 426 (IPIALSGKDV…DRHQKGKSSS (199 aa)) is the Helicase ATP-binding domain. 241-248 (ATTGSGKT) contacts ATP. The DEAD box signature appears at 364-367 (DEAD). A Helicase C-terminal domain is found at 478–635 (YLYYFLLMYK…DVKLLPIEMD (158 aa)). Residues 762 to 782 (DLKGSKNKNKKIEKKRISKKK) form a disordered region. Over residues 766–782 (SKNKNKKIEKKRISKKK) the composition is skewed to basic residues.

This sequence belongs to the DEAD box helicase family. DDX24/MAK5 subfamily.

Its subcellular location is the nucleus. It localises to the nucleolus. The catalysed reaction is ATP + H2O = ADP + phosphate + H(+). In terms of biological role, ATP-binding RNA helicase involved in the biogenesis of 60S ribosomal subunits and is required for the normal formation of 25S and 5.8S rRNAs. This is ATP-dependent RNA helicase MAK5 (MAK5) from Candida albicans (strain SC5314 / ATCC MYA-2876) (Yeast).